A 271-amino-acid chain; its full sequence is Undecaprenyl-diphosphatase (271 aa).

Transmembrane regions (helical) follow at residues 5 to 25, 45 to 65, 86 to 106, 114 to 134, 149 to 169, 189 to 209, 226 to 246, and 251 to 271; these read YALF…FLPV, AATF…AVFW, TLSL…GLGI, LFGP…LIIA, ISYK…WPGF, AAEF…GLDL, VGFI…LALI, and FIPF…VFVA.

This sequence belongs to the UppP family.

The protein localises to the cell inner membrane. The catalysed reaction is di-trans,octa-cis-undecaprenyl diphosphate + H2O = di-trans,octa-cis-undecaprenyl phosphate + phosphate + H(+). Functionally, catalyzes the dephosphorylation of undecaprenyl diphosphate (UPP). Confers resistance to bacitracin. This chain is Undecaprenyl-diphosphatase, found in Aeromonas salmonicida (strain A449).